We begin with the raw amino-acid sequence, 156 residues long: Longistatin (156 aa).

An N-terminal signal peptide occupies residues 1–21; the sequence is MTHRRLLWALCVAALLGVVAA. EF-hand domains follow at residues 70–105 and 123–156; these read SQDELYFYYFRMHDFDNNNKLDGQEMMAAMFHTNHH and DIASYVDSVLRADKNQDGFISYPELRTSDLTNQI. The Ca(2+) site is built by D83, D85, N87, K89, E94, D135, N137, D139, F141, and E146.

In terms of assembly, interacts with host fibrin. Interacts with human RAGE/AGER. In terms of tissue distribution, saliva (at protein level). Salivary gland (at protein level). Not detected in midgut, ovary, trachea, Malpighian tubule system, synganglion and cuticle.

Its subcellular location is the secreted. The protein resides in the cytoplasm. Its activity is regulated as follows. Resistant to inhibition by host SERPINE1. Inhibited by PMSF, aprotinin, antipain and leupeptin. Inhibited by Zn(2+). Functionally, anticoagulant and fibrinolytic protease that modulates blood feeding of ticks on vertebrate hosts. Degrades host fibrinogen and delays fibrin clot formation. Promotes lysis of fibrin clots in the host by activating host plasminogen in the presence of soluble fibrin. Binds Ca(2+). Hydrolyzes serine protease-specific substrates. Required for the formation of a blood pool, an accumulation of blood and tissue fluid developed at the tick's feeding site. Blocks activation of host AGER/RAGE. Reduces AGER/RAGE-dependent production of reactive oxygen species (ROS) in human endothelial cells. Prevents AGER/RAGE-dependent activation of NF-kappa-B and suppresses expression of adhesion molecules, such as VCAM1, ICAM1 and SELE, and secretion of cytokines, such as CSF3/GCSF and TGF-beta, in human endothelial cells. Suppresses RAGE/AGER-mediated migration of mouse peritoneal resident cells. Reduces AGER/RAGE-mediated inflammation in mice tissues. The polypeptide is Longistatin (Haemaphysalis longicornis (Bush tick)).